A 363-amino-acid chain; its full sequence is 3-dehydroquinate synthase (363 aa).

NAD(+)-binding positions include 71-76 (DGEQYK), 105-109 (GVIGD), 129-130 (TT), Lys142, Lys151, and 169-172 (CLKT). Residues Glu184, His247, and His264 each contribute to the Zn(2+) site.

This sequence belongs to the sugar phosphate cyclases superfamily. Dehydroquinate synthase family. The cofactor is NAD(+). It depends on Co(2+) as a cofactor. Zn(2+) serves as cofactor.

It is found in the cytoplasm. The enzyme catalyses 7-phospho-2-dehydro-3-deoxy-D-arabino-heptonate = 3-dehydroquinate + phosphate. It participates in metabolic intermediate biosynthesis; chorismate biosynthesis; chorismate from D-erythrose 4-phosphate and phosphoenolpyruvate: step 2/7. In terms of biological role, catalyzes the conversion of 3-deoxy-D-arabino-heptulosonate 7-phosphate (DAHP) to dehydroquinate (DHQ). The sequence is that of 3-dehydroquinate synthase from Vibrio vulnificus (strain CMCP6).